The sequence spans 62 residues: MTIAFQSSVFALIAISTLLVIGVPVALASPNGWSSNKNVLFSGVSLWIGSVFLVGILNSFIS.

2 helical membrane-spanning segments follow: residues 8–28 and 41–61; these read SVFALIAISTLLVIGVPVALA and FSGVSLWIGSVFLVGILNSFI.

Belongs to the PsbZ family. In terms of assembly, PSII is composed of 1 copy each of membrane proteins PsbA, PsbB, PsbC, PsbD, PsbE, PsbF, PsbH, PsbI, PsbJ, PsbK, PsbL, PsbM, PsbT, PsbY, PsbZ, Psb30/Ycf12, at least 3 peripheral proteins of the oxygen-evolving complex and a large number of cofactors. It forms dimeric complexes.

Its subcellular location is the plastid. It is found in the chloroplast thylakoid membrane. May control the interaction of photosystem II (PSII) cores with the light-harvesting antenna, regulates electron flow through the 2 photosystem reaction centers. PSII is a light-driven water plastoquinone oxidoreductase, using light energy to abstract electrons from H(2)O, generating a proton gradient subsequently used for ATP formation. The protein is Photosystem II reaction center protein Z of Cryptomeria japonica (Japanese cedar).